The sequence spans 202 residues: Putative 3-methyladenine DNA glycosylase (202 aa).

Belongs to the DNA glycosylase MPG family.

The sequence is that of Putative 3-methyladenine DNA glycosylase from Clostridioides difficile (strain 630) (Peptoclostridium difficile).